Consider the following 98-residue polypeptide: MSMMYFNIFMAFTVSLVGLLMYRSHLMSSLLCLEGMMLSLFVMMSVTILNNHFTLASMAPIILLVFAACEAALGLSLLVMVSNTYGTDYVQNLNLLQC.

3 helical membrane passes run 1–21, 29–49, and 61–81; these read MSMMYFNIFMAFTVSLVGLLM, SLLCLEGMMLSLFVMMSVTIL, and IILLVFAACEAALGLSLLVMV.

It belongs to the complex I subunit 4L family. Core subunit of respiratory chain NADH dehydrogenase (Complex I) which is composed of 45 different subunits.

It localises to the mitochondrion inner membrane. The catalysed reaction is a ubiquinone + NADH + 5 H(+)(in) = a ubiquinol + NAD(+) + 4 H(+)(out). Its function is as follows. Core subunit of the mitochondrial membrane respiratory chain NADH dehydrogenase (Complex I) which catalyzes electron transfer from NADH through the respiratory chain, using ubiquinone as an electron acceptor. Part of the enzyme membrane arm which is embedded in the lipid bilayer and involved in proton translocation. This Zalophus californianus (California sealion) protein is NADH-ubiquinone oxidoreductase chain 4L (MT-ND4L).